The primary structure comprises 413 residues: Variant surface glycoprotein YnAT 1.3 (413 aa).

Residues 1 to 22 (MLDNSRARSIVHLLILLKAHVI) form the signal peptide. N-linked (GlcNAc...) asparagine glycosylation is found at asparagine 91, asparagine 361, and asparagine 379. Asparagine 379 is lipidated: GPI-anchor amidated asparagine. Residues 380–413 (SSNPTSRQNSVVQEPTTVSAAAITPLILPWTLLI) constitute a propeptide, removed in mature form.

It localises to the cell membrane. VSG forms a coat on the surface of the parasite. The trypanosome evades the immune response of the host by expressing a series of antigenically distinct VSGs from an estimated 1000 VSG genes. In Trypanosoma congolense, this protein is Variant surface glycoprotein YnAT 1.3.